A 589-amino-acid polypeptide reads, in one-letter code: BTB/POZ domain and ankyrin repeat-containing protein NPR3 (589 aa).

The segment at 1 to 25 is disordered; sequence METSTISFSSSSPPSPPPPQPAPGD. A compositionally biased stretch (pro residues) spans 13 to 22; sequence PPSPPPPQPA. Residues 52–137 enclose the BTB domain; the sequence is AEIVLASGGG…LYTGRLRSAP (86 aa). The C2HC NPR-type zinc-finger motif lies at 140–154; that stretch reads AAACLDDGCSHDACR. 4 residues coordinate Zn(2+): Cys143, Cys148, His150, and Cys153. ANK repeat units follow at residues 260–290, 292–319, and 323–352; these read KRVRNIHKALDSDDVDLVGMLLKESPVTLDD, FAIHYAAAYCEPKVLAELLKLESANVNL, and SGYTPLHMACMRREPDIIVSLIEKGASVLE. The segment at 382 to 521 is salicylic acid-binding core (SBC); the sequence is ERSKAYLCIG…LDKFLNEEST (140 aa). Arg433 lines the salicylate pocket. The disordered stretch occupies residues 555–589; the sequence is DKAAGAAISSSTSASSSPRYETKLRPGNKKGKLSR. The segment covering 558–571 has biased composition (low complexity); sequence AGAAISSSTSASSS. The segment covering 580–589 has biased composition (basic residues); the sequence is PGNKKGKLSR.

This sequence belongs to the plant 'ANKYRIN-BTB/POZ' family. 'NPR1-like' subfamily. Interacts with TGA2.1, TGA2.2, TGA2.3, LG2, TGAL1, TGAL4, NRR, RH1, RH2 and RH3.

The protein resides in the nucleus. It functions in the pathway protein modification; protein ubiquitination. In terms of biological role, salicylic acid (SA)-binding substrate-specific adapter of an E3 ubiquitin-protein ligase complex (CUL3-RBX1-BTB) which mediates the ubiquitination and subsequent proteasomal degradation of target proteins. Involved in defense response against the bacterial blight disease caused by Xanthomonas oryzae pv. oryzae (Xoo). Plants expressing an NPR3/NH3 transgene driven by its native promoter show enhanced resistance to the Xoo pathogen, and exhibit elevated sensitivity to benzothiadiazole (BTH) treatment and enhanced induction of defense-related genes upon treatment with BTH. Intriguingly, constitutive over-expression of NPR3/NH3 with a ubiquitin promoter does not confer disease resistance to Xoo. This Oryza sativa subsp. japonica (Rice) protein is BTB/POZ domain and ankyrin repeat-containing protein NPR3.